The following is a 181-amino-acid chain: MLIFKDAFTDDELASDSFPMKLVDGLIWEFKGRQVVRREGEIQLAGANPSTEGEDGDEGSEECVERGIDFVLNHRLQEMNCYEDLATFKSYCKSFMKKVVELMQKNGKSEAEISEFKRKIQAWVVSLLSKDRFKQLQFFIGERMAEGQGEGQVAVVEYRDEEEGEVPYLMLVKEALVEEKQ.

The TCTP domain maps to 1–181 (MLIFKDAFTD…VKEALVEEKQ (181 aa)).

Belongs to the TCTP family.

The protein resides in the cytoplasm. In terms of biological role, involved in calcium binding and microtubule stabilization. This Wuchereria bancrofti protein is Translationally-controlled tumor protein homolog.